The chain runs to 408 residues: Aminoacylase-1B (408 aa).

Histidine 80 serves as a coordination point for Zn(2+). The active site involves aspartate 82. A Zn(2+)-binding site is contributed by aspartate 113. Glutamate 147 serves as the catalytic Proton acceptor. 3 residues coordinate Zn(2+): glutamate 148, glutamate 175, and histidine 373. A Phosphoserine modification is found at serine 408.

It belongs to the peptidase M20A family. Homodimer. The cofactor is Zn(2+). Expressed in kidney.

It is found in the cytoplasm. The enzyme catalyses an N-acyl-L-amino acid + H2O = an L-alpha-amino acid + a carboxylate. The catalysed reaction is an N-acetyl-L-cysteine-S-conjugate + H2O = an S-substituted L-cysteine + acetate. Involved in the hydrolysis of N-acylated or N-acetylated amino acids (except L-aspartate). The chain is Aminoacylase-1B (Acy1b) from Rattus norvegicus (Rat).